The primary structure comprises 20 residues: Agglutinin beta-3 chain (20 aa).

The segment at 1–20 (GPNGKSQSIIVGPWGDRVTN) is disordered.

Belongs to the jacalin lectin family. In terms of assembly, formed of four alpha chains and four beta chains.

D-galactose-specific lectin, binds the T-antigen structure Gal-beta1,3-GalNAc. The protein is Agglutinin beta-3 chain of Maclura pomifera (Osage orange).